Reading from the N-terminus, the 148-residue chain is Large ribosomal subunit protein bL9 (148 aa).

This sequence belongs to the bacterial ribosomal protein bL9 family.

In terms of biological role, binds to the 23S rRNA. In Pseudomonas putida (strain GB-1), this protein is Large ribosomal subunit protein bL9.